Here is a 488-residue protein sequence, read N- to C-terminus: UDP-N-acetylmuramate--L-alanine ligase (488 aa).

129-135 contributes to the ATP binding site; that stretch reads GTHGKTT.

This sequence belongs to the MurCDEF family.

Its subcellular location is the cytoplasm. It catalyses the reaction UDP-N-acetyl-alpha-D-muramate + L-alanine + ATP = UDP-N-acetyl-alpha-D-muramoyl-L-alanine + ADP + phosphate + H(+). Its pathway is cell wall biogenesis; peptidoglycan biosynthesis. Its function is as follows. Cell wall formation. The protein is UDP-N-acetylmuramate--L-alanine ligase of Chromohalobacter salexigens (strain ATCC BAA-138 / DSM 3043 / CIP 106854 / NCIMB 13768 / 1H11).